The sequence spans 420 residues: Glutamate dehydrogenase (420 aa).

Residue Lys-105 is part of the active site. 220 to 226 contacts NAD(+); the sequence is GYGNAGY.

Belongs to the Glu/Leu/Phe/Val dehydrogenases family. Homohexamer.

It localises to the cytoplasm. It catalyses the reaction L-glutamate + NAD(+) + H2O = 2-oxoglutarate + NH4(+) + NADH + H(+). It carries out the reaction L-glutamate + NADP(+) + H2O = 2-oxoglutarate + NH4(+) + NADPH + H(+). The protein is Glutamate dehydrogenase (gdhA) of Pyrococcus furiosus (strain ATCC 43587 / DSM 3638 / JCM 8422 / Vc1).